We begin with the raw amino-acid sequence, 637 residues long: DNA gyrase subunit B (637 aa).

The region spanning 421–535 (SEIYIVEGDS…HGYVYIAQPP (115 aa)) is the Toprim domain. The Mg(2+) site is built by Glu-427, Asp-500, and Asp-502.

Belongs to the type II topoisomerase GyrB family. Heterotetramer, composed of two GyrA and two GyrB chains. In the heterotetramer, GyrA contains the active site tyrosine that forms a transient covalent intermediate with DNA, while GyrB binds cofactors and catalyzes ATP hydrolysis. Requires Mg(2+) as cofactor. It depends on Mn(2+) as a cofactor. Ca(2+) serves as cofactor.

The protein resides in the cytoplasm. The catalysed reaction is ATP-dependent breakage, passage and rejoining of double-stranded DNA.. A type II topoisomerase that negatively supercoils closed circular double-stranded (ds) DNA in an ATP-dependent manner to modulate DNA topology and maintain chromosomes in an underwound state. Negative supercoiling favors strand separation, and DNA replication, transcription, recombination and repair, all of which involve strand separation. Also able to catalyze the interconversion of other topological isomers of dsDNA rings, including catenanes and knotted rings. Type II topoisomerases break and join 2 DNA strands simultaneously in an ATP-dependent manner. In Halalkalibacterium halodurans (strain ATCC BAA-125 / DSM 18197 / FERM 7344 / JCM 9153 / C-125) (Bacillus halodurans), this protein is DNA gyrase subunit B.